The following is a 949-amino-acid chain: Coiled-coil domain-containing protein 80 (949 aa).

An N-terminal signal peptide occupies residues 1–22 (MMWKMGPHFTTLLAMWLVCGSA). Disordered stretches follow at residues 24–79 (HSPA…RRKS), 112–132 (SSAR…MLRF), and 289–610 (HVVQ…PKKS). Residues 112–123 (SSAREMVRDEGS) are compositionally biased toward basic and acidic residues. Residues 295–307 (NEGGGGAGGTGLG) show a composition bias toward gly residues. Over residues 308 to 328 (GDKRKEDPRRTQVHPTREAPR) the composition is skewed to basic and acidic residues. Positions 345 to 380 (RATTLPPAPVTTATRATSRVVTIAARPTTTTAYPAT) are enriched in low complexity. Over residues 419–429 (PRKEQQREKPQ) the composition is skewed to basic and acidic residues. A compositionally biased stretch (polar residues) spans 436–445 (KATNYGSFTA). The span at 463 to 477 (RFRDNRTDKREHGHQ) shows a compositional bias: basic and acidic residues. A glycan (N-linked (GlcNAc...) asparagine) is linked at Asn-467. The span at 487-498 (KPVKGKLPKKKD) shows a compositional bias: basic residues. Basic and acidic residues-rich tracts occupy residues 499 to 510 (RILSNEYEDKYD), 534 to 548 (KESK…PEKE), and 556 to 581 (AKQD…EKDK). Residues Lys-544 and Lys-547 each participate in a glycyl lysine isopeptide (Lys-Gly) (interchain with G-Cter in SUMO2) cross-link. Positions 554 to 587 (KSAKQDKLLKSEKQAKKAEKKTKQEKDKNKKKKA) form a coiled coil.

The protein belongs to the CCDC80 family. Binds to various extracellular matrix proteins. Phosphorylated. Expressed in brain, stomach, colon, rectum, liver, lung, kidney, adipocytes and testis.

It is found in the secreted. It localises to the extracellular space. The protein localises to the extracellular matrix. Promotes cell adhesion and matrix assembly. This chain is Coiled-coil domain-containing protein 80 (Ccdc80), found in Mus musculus (Mouse).